A 131-amino-acid polypeptide reads, in one-letter code: Arsenate reductase (131 aa).

Active-site nucleophile residues include cysteine 10, cysteine 82, and cysteine 89. 2 cysteine pairs are disulfide-bonded: cysteine 10-cysteine 82 and cysteine 82-cysteine 89.

This sequence belongs to the low molecular weight phosphotyrosine protein phosphatase family. Thioredoxin-coupled ArsC subfamily.

It localises to the cytoplasm. The enzyme catalyses arsenate + [thioredoxin]-dithiol + H(+) = arsenite + [thioredoxin]-disulfide + H2O. Its function is as follows. Catalyzes the reduction of arsenate [As(V)] to arsenite [As(III)]. In Staphylococcus aureus (strain bovine RF122 / ET3-1), this protein is Arsenate reductase.